The sequence spans 98 residues: Integration host factor subunit alpha (98 aa).

The protein belongs to the bacterial histone-like protein family. In terms of assembly, heterodimer of an alpha and a beta chain.

Functionally, this protein is one of the two subunits of integration host factor, a specific DNA-binding protein that functions in genetic recombination as well as in transcriptional and translational control. The chain is Integration host factor subunit alpha from Actinobacillus pleuropneumoniae serotype 5b (strain L20).